The sequence spans 1183 residues: DNA-directed RNA polymerase subunit beta (1183 aa).

The protein belongs to the RNA polymerase beta chain family. The RNAP catalytic core consists of 2 alpha, 1 beta, 1 beta' and 1 omega subunit. When a sigma factor is associated with the core the holoenzyme is formed, which can initiate transcription.

It carries out the reaction RNA(n) + a ribonucleoside 5'-triphosphate = RNA(n+1) + diphosphate. DNA-dependent RNA polymerase catalyzes the transcription of DNA into RNA using the four ribonucleoside triphosphates as substrates. This Staphylococcus aureus (strain JH9) protein is DNA-directed RNA polymerase subunit beta.